The sequence spans 681 residues: Peroxisomal acyl-coenzyme A oxidase 2 (681 aa).

A phosphoserine mark is found at Ser-3 and Ser-9. At Thr-13 the chain carries Phosphothreonine. Lys-66, Lys-137, Lys-453, and Lys-561 each carry N6-succinyllysine. The short motif at 679-681 (SKL) is the Microbody targeting signal element.

This sequence belongs to the acyl-CoA oxidase family. Homodimer. Requires FAD as cofactor. As to expression, present in all tissues tested: heart, brain, placenta, lung, liver, skeletal muscle, kidney and pancreas. Most abundant in heart, liver and kidney.

It localises to the peroxisome. It catalyses the reaction (25R)-3alpha,7alpha,12alpha-trihydroxy-5beta-cholestan-26-oyl-CoA + A + H2O = (24R,25R)-3alpha,7alpha,12alpha,24-tetrahydroxy-5beta-cholestan-26-oyl-CoA + AH2. It carries out the reaction (25S)-3alpha,7alpha,12alpha-trihydroxy-5beta-cholestan-26-oyl-CoA + O2 = (24E)-3alpha,7alpha,12alpha-trihydroxy-5beta-cholest-24-en-26-oyl-CoA + H2O2. In terms of biological role, oxidizes the CoA esters of the bile acid intermediates di- and tri-hydroxycholestanoic acids. Capable of oxidizing short as well as long chain 2-methyl branched fatty acids. The protein is Peroxisomal acyl-coenzyme A oxidase 2 of Homo sapiens (Human).